The following is a 28-amino-acid chain: Dolichyl-diphosphooligosaccharide--protein glycosyltransferase subunit 1 (28 aa).

The protein belongs to the OST1 family. As to quaternary structure, component of the oligosaccharyltransferase (OST) complex.

It localises to the endoplasmic reticulum membrane. The protein operates within protein modification; protein glycosylation. In terms of biological role, subunit of the oligosaccharyl transferase (OST) complex that catalyzes the initial transfer of a defined glycan (Glc(3)Man(9)GlcNAc(2) in eukaryotes) from the lipid carrier dolichol-pyrophosphate to an asparagine residue within an Asn-X-Ser/Thr consensus motif in nascent polypeptide chains, the first step in protein N-glycosylation. N-glycosylation occurs cotranslationally and the complex associates with the Sec61 complex at the channel-forming translocon complex that mediates protein translocation across the endoplasmic reticulum (ER). All subunits are required for a maximal enzyme activity. The chain is Dolichyl-diphosphooligosaccharide--protein glycosyltransferase subunit 1 from Gallus gallus (Chicken).